The sequence spans 125 residues: Large ribosomal subunit protein bL12 (125 aa).

This sequence belongs to the bacterial ribosomal protein bL12 family. Homodimer. Part of the ribosomal stalk of the 50S ribosomal subunit. Forms a multimeric L10(L12)X complex, where L10 forms an elongated spine to which 2 to 4 L12 dimers bind in a sequential fashion. Binds GTP-bound translation factors.

Its function is as follows. Forms part of the ribosomal stalk which helps the ribosome interact with GTP-bound translation factors. Is thus essential for accurate translation. This Rickettsia felis (strain ATCC VR-1525 / URRWXCal2) (Rickettsia azadi) protein is Large ribosomal subunit protein bL12.